A 498-amino-acid chain; its full sequence is Argininosuccinate lyase 1 (498 aa).

The protein belongs to the lyase 1 family. Argininosuccinate lyase subfamily.

Its subcellular location is the cytoplasm. The catalysed reaction is 2-(N(omega)-L-arginino)succinate = fumarate + L-arginine. It participates in amino-acid biosynthesis; L-arginine biosynthesis; L-arginine from L-ornithine and carbamoyl phosphate: step 3/3. This chain is Argininosuccinate lyase 1, found in Shouchella clausii (strain KSM-K16) (Alkalihalobacillus clausii).